The primary structure comprises 437 residues: UDP-N-acetylmuramate--L-alanine ligase (437 aa).

Residue 108-114 (GAHGKTS) coordinates ATP.

Belongs to the MurCDEF family.

The protein resides in the cytoplasm. It carries out the reaction UDP-N-acetyl-alpha-D-muramate + L-alanine + ATP = UDP-N-acetyl-alpha-D-muramoyl-L-alanine + ADP + phosphate + H(+). It participates in cell wall biogenesis; peptidoglycan biosynthesis. In terms of biological role, cell wall formation. The sequence is that of UDP-N-acetylmuramate--L-alanine ligase from Staphylococcus epidermidis (strain ATCC 12228 / FDA PCI 1200).